A 282-amino-acid chain; its full sequence is MATYLIGDVHGCYDELIALLQQVEFTPDTDTLWLTGDLVARGPGSLDVLRYVKSLGNSVRLVLGNHDLHLLAVFAGISRNKPKDRLTPLLEAPDADELLNWLRRQPLLLVDEEKKLIMAHAGITPQWDLQTAKECARDVEAVLSSDSYPFFLDAMYGDMPNNWSPELSGLARLRFITNAFTRMRYCFPNGQLDMYSKASPENAPAPLKPWFAIPGPVSEAYSIAFGHWASLEGKGTPEGIYALDTGCCWGGELTCLRWEDKQYFVQPSNRQMDMGEGEAVNA.

The protein belongs to the Ap4A hydrolase family.

It carries out the reaction P(1),P(4)-bis(5'-adenosyl) tetraphosphate + H2O = 2 ADP + 2 H(+). In terms of biological role, hydrolyzes diadenosine 5',5'''-P1,P4-tetraphosphate to yield ADP. The sequence is that of Bis(5'-nucleosyl)-tetraphosphatase, symmetrical from Salmonella paratyphi C (strain RKS4594).